Here is a 343-residue protein sequence, read N- to C-terminus: MPIIAPISRDERRLMQKAIHKTHDKNYARRLTAMLMLHRGDRVSDVARTLCCARSSVGRWINWFTQSGVEGLKSLPAGRARRWPFEHICTLLRELVKHSPGDFGYQRSRWSTELLAIKINEITGCQLNAGTVRRWLPSAGIVWRRAAPTLRIRDPHKDEKMAAIHKALDECSAEHPVFYEDEVDIHLNPKIGADWQLRGQQKRVVTPGQNEKYYLAGALHSGTGKVSCVGGNSKSSALFISLLKRLKATYRRAKTITLIVDNYIIHKSRETQSWLKENPKFRVIYQPVYSPWVNHVERLWQALHDTITRNHQCSSMWQLLKKVRHFMETVSPFPGGKHGLAKV.

The polypeptide is Insertion element IS630 uncharacterized 39 kDa protein (Shigella sonnei).